The chain runs to 498 residues: ATP synthase subunit beta, chloroplastic (498 aa).

Position 172–179 (glycine 172–threonine 179) interacts with ATP.

It belongs to the ATPase alpha/beta chains family. F-type ATPases have 2 components, CF(1) - the catalytic core - and CF(0) - the membrane proton channel. CF(1) has five subunits: alpha(3), beta(3), gamma(1), delta(1), epsilon(1). CF(0) has four main subunits: a(1), b(1), b'(1) and c(9-12).

It is found in the plastid. Its subcellular location is the chloroplast thylakoid membrane. The enzyme catalyses ATP + H2O + 4 H(+)(in) = ADP + phosphate + 5 H(+)(out). Produces ATP from ADP in the presence of a proton gradient across the membrane. The catalytic sites are hosted primarily by the beta subunits. This chain is ATP synthase subunit beta, chloroplastic, found in Triticum aestivum (Wheat).